The chain runs to 231 residues: ATP-dependent dethiobiotin synthetase BioD 2 (231 aa).

An ATP-binding site is contributed by 13–18 (SVGKTV). Threonine 17 lines the Mg(2+) pocket. Residue lysine 38 is part of the active site. ATP is bound by residues aspartate 55, 112-115 (EGTG), 172-173 (NR), 201-203 (PYL), and glutamine 208. Residues aspartate 55 and glutamate 112 each coordinate Mg(2+).

It belongs to the dethiobiotin synthetase family. In terms of assembly, homodimer. The cofactor is Mg(2+).

It localises to the cytoplasm. It carries out the reaction (7R,8S)-7,8-diammoniononanoate + CO2 + ATP = (4R,5S)-dethiobiotin + ADP + phosphate + 3 H(+). Its pathway is cofactor biosynthesis; biotin biosynthesis; biotin from 7,8-diaminononanoate: step 1/2. In terms of biological role, catalyzes a mechanistically unusual reaction, the ATP-dependent insertion of CO2 between the N7 and N8 nitrogen atoms of 7,8-diaminopelargonic acid (DAPA, also called 7,8-diammoniononanoate) to form a ureido ring. In Salmonella typhimurium (strain LT2 / SGSC1412 / ATCC 700720), this protein is ATP-dependent dethiobiotin synthetase BioD 2.